A 297-amino-acid chain; its full sequence is Pyridoxal 5'-phosphate synthase subunit Pdx1 (297 aa).

D27 contacts D-ribose 5-phosphate. The Schiff-base intermediate with D-ribose 5-phosphate role is filled by K84. Residue G156 coordinates D-ribose 5-phosphate. Residue R168 coordinates D-glyceraldehyde 3-phosphate. Residues G217 and 238-239 contribute to the D-ribose 5-phosphate site; that span reads GS.

It belongs to the PdxS/SNZ family. As to quaternary structure, homohexamer and homododecamer. In the presence of Pdx2, forms a dodecamer of heterodimers.

The enzyme catalyses aldehydo-D-ribose 5-phosphate + D-glyceraldehyde 3-phosphate + L-glutamine = pyridoxal 5'-phosphate + L-glutamate + phosphate + 3 H2O + H(+). Its pathway is cofactor biosynthesis; pyridoxal 5'-phosphate biosynthesis. In terms of biological role, catalyzes the formation of pyridoxal 5'-phosphate from ribose 5-phosphate (RBP), glyceraldehyde 3-phosphate (G3P) and ammonia. The ammonia is provided by Pdx2. Can also use ribulose 5-phosphate and dihydroxyacetone phosphate as substrates, resulting from enzyme-catalyzed isomerization of RBP and G3P, respectively. This is Pyridoxal 5'-phosphate synthase subunit Pdx1 from Plasmodium berghei.